A 506-amino-acid polypeptide reads, in one-letter code: Transcription factor CP2 (506 aa).

The region spanning Glu61–Ser300 is the Grh/CP2 DB domain. Positions Glu133 to Val395 are DNA-binding. Disordered regions lie at residues Phe238–Ser268 and Ser291–Pro316. Residues Lys241–Tyr265 show a composition bias toward basic and acidic residues. A compositionally biased stretch (polar residues) spans Ser291–Ser300.

This sequence belongs to the grh/CP2 family. CP2 subfamily. In terms of assembly, component of the SSP (stage selector protein) complex, which appears to be a heteromer of TFCP2 and 2 copies of NFE4.

The protein resides in the nucleus. In terms of biological role, may function as a transcription factor. The polypeptide is Transcription factor CP2 (tfcp2) (Xenopus laevis (African clawed frog)).